We begin with the raw amino-acid sequence, 205 residues long: MNVFDKYAEEYDKWFDENEIIYKSEIEALKRHIPKGRGLEIGVGTGRFAKPFNIKIGVDISKEMAKIAEKRGIKVIIAKGEDLPFKDEEFDFFLINTVLEFAENPKKMIEEAKRVLKRGGKIIIGIIDRDSFLGKMYEEKKQKSKFYKDANFLSAKEVIEMLKELGFKNIKATQTIFKEIDKVDKVEVKEGYGEGGFVAISAEKI.

The protein to M.jannaschii MJ0638 and MJ1252 and M.tuberculosis Rv2003c.

This is an uncharacterized protein from Methanocaldococcus jannaschii (strain ATCC 43067 / DSM 2661 / JAL-1 / JCM 10045 / NBRC 100440) (Methanococcus jannaschii).